Reading from the N-terminus, the 446-residue chain is Glutamate--tRNA ligase (446 aa).

The short motif at 9-19 (PSPTGLLHVGN) is the 'HIGH' region element. The short motif at 240 to 244 (GLSKR) is the 'KMSKS' region element. Lys243 is an ATP binding site.

The protein belongs to the class-I aminoacyl-tRNA synthetase family. Glutamate--tRNA ligase type 1 subfamily. As to quaternary structure, monomer.

The protein localises to the cytoplasm. The catalysed reaction is tRNA(Glu) + L-glutamate + ATP = L-glutamyl-tRNA(Glu) + AMP + diphosphate. Its function is as follows. Catalyzes the attachment of glutamate to tRNA(Glu) in a two-step reaction: glutamate is first activated by ATP to form Glu-AMP and then transferred to the acceptor end of tRNA(Glu). The chain is Glutamate--tRNA ligase from Azospirillum brasilense.